The chain runs to 112 residues: MEAHSEHLCLRMIRLNADEMEEPLLHYMSYERLVNTYERYKSIGIVAEIAKRVFVETRILMTKVSTAQCMKPGREKRWKGSVRRRSLENFRLRGGIQWYSHACRGMAIGLQN.

It belongs to the UPF0329 family.

This Encephalitozoon cuniculi (strain GB-M1) (Microsporidian parasite) protein is UPF0329 protein ECU11_0080.